A 167-amino-acid chain; its full sequence is Ubiquitin-conjugating enzyme E2 15 (167 aa).

A UBC core domain is found at 5–165; it reads ASEQLLRKQL…VRRLVRRSIE (161 aa). Cysteine 90 acts as the Glycyl thioester intermediate in catalysis.

Belongs to the ubiquitin-conjugating enzyme family.

It carries out the reaction S-ubiquitinyl-[E1 ubiquitin-activating enzyme]-L-cysteine + [E2 ubiquitin-conjugating enzyme]-L-cysteine = [E1 ubiquitin-activating enzyme]-L-cysteine + S-ubiquitinyl-[E2 ubiquitin-conjugating enzyme]-L-cysteine.. Its pathway is protein modification; protein ubiquitination. Its function is as follows. Catalyzes the covalent attachment of ubiquitin to other proteins. Has a role in the formation of chromatin structures that influence the localization of transcriptional silencing factors. The chain is Ubiquitin-conjugating enzyme E2 15 (ubc15) from Schizosaccharomyces pombe (strain 972 / ATCC 24843) (Fission yeast).